The chain runs to 141 residues: Large ribosomal subunit protein uL23A (141 aa).

A phosphoserine mark is found at Ser-68 and Ser-70.

Belongs to the universal ribosomal protein uL23 family. In terms of assembly, component of the large ribosomal subunit (LSU). Mature yeast ribosomes consist of a small (40S) and a large (60S) subunit. The 40S small subunit contains 1 molecule of ribosomal RNA (18S rRNA) and at least 33 different proteins. The large 60S subunit contains 3 rRNA molecules (25S, 5.8S and 5S rRNA) and at least 46 different proteins. uL23 is associated with the polypeptide exit tunnel.

The protein resides in the cytoplasm. In terms of biological role, this protein binds to a specific region on the 26S rRNA. Its function is as follows. Component of the ribosome, a large ribonucleoprotein complex responsible for the synthesis of proteins in the cell. The small ribosomal subunit (SSU) binds messenger RNAs (mRNAs) and translates the encoded message by selecting cognate aminoacyl-transfer RNA (tRNA) molecules. The large subunit (LSU) contains the ribosomal catalytic site termed the peptidyl transferase center (PTC), which catalyzes the formation of peptide bonds, thereby polymerizing the amino acids delivered by tRNAs into a polypeptide chain. The nascent polypeptides leave the ribosome through a tunnel in the LSU and interact with protein factors that function in enzymatic processing, targeting, and the membrane insertion of nascent chains at the exit of the ribosomal tunnel. uL23 is a major component of the universal docking site for these factors at the polypeptide exit tunnel. The chain is Large ribosomal subunit protein uL23A (rpl2501) from Schizosaccharomyces pombe (strain 972 / ATCC 24843) (Fission yeast).